The primary structure comprises 363 residues: Dioxygenase sphC (363 aa).

The Fe cation site is built by His183, Asp185, and His259.

It belongs to the PhyH family. As to quaternary structure, homodimer. Fe cation is required as a cofactor.

It carries out the reaction sphingofungin B1 + 2-oxoglutarate + O2 = sphingofungin B + succinate + CO2. It functions in the pathway secondary metabolite biosynthesis. Functionally, dioxygenase; part of the gene cluster that mediates the biosynthesis of sphingofungins, bioactive molecules acting as sphingolipid inhibitors via inhibiting serine palmitoyl transferase (SPT). Within the pathway, sphC catalyzes the hydrolxylation at C-4 to convert sphingofungin B1 into sphingofungin B as well as presphingofungin into sphingofungin B2. Sphingofungin biosynthesis starts with the PKS sphB that produces an C18 polyketide precursor 3-hydroxyoctadeca-4,10-dienoyl-ACP containing one delta-6 desaturation and one delta-12 desaturation. The aminoacyl transferase sphA uses the sphB product to produce 3-keto-presphingofungin by adding an aminomalonate molecule. SphF then reduces the C-3 ketone of 3-keto-presphingofungin which leads to presphingofungin. The cytochrome P450 monooxygenase sphH converts presphingofungin into sphingofungin B1 which is further converted to sphingofungin B by the dioxygenase sphC. SphC is also able to convert presphingofungin into sphingofungin B2. The acetyltransferase sphE acetylates sphingofungin B to produce sphingofungin C, but can also convert sphingofungin B1 into sphingofungin C1 and sphingofungin B2 into sphingofungin C2. Finally, sphingofungin C can be spontaneously converted into sphingofungin D. This is Dioxygenase sphC from Aspergillus fumigatus (strain CBS 144.89 / FGSC A1163 / CEA10) (Neosartorya fumigata).